A 314-amino-acid polypeptide reads, in one-letter code: Dioxygenase easH (314 aa).

Fe cation contacts are provided by His-141, Asp-143, and His-217.

The protein belongs to the PhyH family. Homodimer. It depends on Fe cation as a cofactor.

The protein operates within alkaloid biosynthesis; ergot alkaloid biosynthesis. In terms of biological role, dioxygenase; part of the gene cluster that mediates the biosynthesis of fungal ergot alkaloid. DmaW catalyzes the first step of ergot alkaloid biosynthesis by condensing dimethylallyl diphosphate (DMAP) and tryptophan to form 4-dimethylallyl-L-tryptophan. The second step is catalyzed by the methyltransferase easF that methylates 4-dimethylallyl-L-tryptophan in the presence of S-adenosyl-L-methionine, resulting in the formation of 4-dimethylallyl-L-abrine. The catalase easC and the FAD-dependent oxidoreductase easE then transform 4-dimethylallyl-L-abrine to chanoclavine-I which is further oxidized by easD in the presence of NAD(+), resulting in the formation of chanoclavine-I aldehyde. Agroclavine dehydrogenase easG then mediates the conversion of chanoclavine-I aldehyde to agroclavine via a non-enzymatic adduct reaction: the substrate is an iminium intermediate that is formed spontaneously from chanoclavine-I aldehyde in the presence of glutathione. The presence of easA is not required to complete this reaction. Further conversion of agroclavine to paspalic acid is a two-step process involving oxidation of agroclavine to elymoclavine and of elymoclavine to paspalic acid, the second step being performed by the elymoclavine oxidase cloA. Paspalic acid is then further converted to D-lysergic acid. Ergopeptines are assembled from D-lysergic acid and three different amino acids by the D-lysergyl-peptide-synthetases composed each of a monomudular and a trimodular nonribosomal peptide synthetase subunit. LpsB and lpsC encode the monomodular subunits responsible for D-lysergic acid activation and incorporation into the ergopeptine backbone. LpsA1 and A2 subunits encode the trimodular nonribosomal peptide synthetase assembling the tripeptide portion of ergopeptines. LpsA1 is responsible for formation of the major ergopeptine, ergotamine, and lpsA2 for alpha-ergocryptine, the minor ergopeptine of the total alkaloid mixture elaborated by C.purpurea. D-lysergyl-tripeptides are assembled by the nonribosomal peptide synthetases and released as N-(D-lysergyl-aminoacyl)-lactams. Cyclolization of the D-lysergyl-tripeptides is performed by the Fe(2+)/2-ketoglutarate-dependent dioxygenase easH which introduces a hydroxyl group into N-(D-lysergyl-aminoacyl)-lactam at alpha-C of the aminoacyl residue followed by spontaneous condensation with the terminal lactam carbonyl group. The sequence is that of Dioxygenase easH from Claviceps purpurea (strain 20.1) (Ergot fungus).